The sequence spans 2325 residues: Protein Ycf2 (2325 aa).

3 disordered regions span residues 168 to 189 (SSQL…GTED), 221 to 251 (TEIE…EMNN), and 947 to 1006 (KRKK…KRKE). The segment covering 230-240 (KGLSGSSSKSR) has biased composition (low complexity). Basic and acidic residues-rich tracts occupy residues 241–250 (LFTEGEKEMN) and 955–1004 (KRKE…PEKR). 1436-1443 (GSIGSGRS) provides a ligand contact to ATP. Disordered regions lie at residues 1510–1529 (YEDR…DYEP), 1855–1996 (LVGS…LLRP), and 2063–2179 (PAEE…DGFS). Residues 1861–1976 (TEEEVEGTEE…VEGTEDEEGE (116 aa)) show a composition bias toward acidic residues. A compositionally biased stretch (basic and acidic residues) spans 1977–1989 (GTEKDSSQFDNDR). Acidic residues-rich tracts occupy residues 2063–2080 (PAEE…EALE) and 2087–2162 (GEEE…ENDS).

This sequence belongs to the Ycf2 family.

It is found in the plastid. The protein localises to the chloroplast stroma. Probable ATPase of unknown function. Its presence in a non-photosynthetic plant (Epifagus virginiana) and experiments in tobacco indicate that it has an essential function which is probably not related to photosynthesis. The polypeptide is Protein Ycf2 (Oenothera biennis (German evening primrose)).